Reading from the N-terminus, the 230-residue chain is Ribose-5-phosphate isomerase A (230 aa).

Substrate-binding positions include threonine 29–threonine 32, aspartate 85–aspartate 88, and lysine 99–glycine 102. Residue glutamate 108 is the Proton acceptor of the active site. Lysine 126 serves as a coordination point for substrate.

The protein belongs to the ribose 5-phosphate isomerase family. As to quaternary structure, homodimer.

The enzyme catalyses aldehydo-D-ribose 5-phosphate = D-ribulose 5-phosphate. Its pathway is carbohydrate degradation; pentose phosphate pathway; D-ribose 5-phosphate from D-ribulose 5-phosphate (non-oxidative stage): step 1/1. In terms of biological role, catalyzes the reversible conversion of ribose-5-phosphate to ribulose 5-phosphate. In Synechococcus sp. (strain JA-3-3Ab) (Cyanobacteria bacterium Yellowstone A-Prime), this protein is Ribose-5-phosphate isomerase A.